The sequence spans 799 residues: Ribosome biogenesis protein BOP1 homolog (799 aa).

The disordered stretch occupies residues 1–171 (MPRRVRAQKR…DDTSDEEHSL (171 aa)). Over residues 58-69 (SESDVTDDEQID) the composition is skewed to acidic residues. Residues 70–81 (EEARQADRDLLK) are compositionally biased toward basic and acidic residues. Over residues 93–121 (DPSDADNDDDDDEEEAASDDDDEEEDAEP) the composition is skewed to acidic residues. The segment covering 122–132 (SSDSSNEASDA) has biased composition (low complexity). 7 WD repeats span residues 457-498 (GHKA…RVVT), 500-538 (DAEV…AAID), 584-626 (PHHA…TQHP), 629-669 (KRNR…KKLL), 670-709 (TGVR…KPYK), 713-752 (YHKY…DLGQ), and 769-799 (SDGM…KLHV).

This sequence belongs to the WD repeat BOP1/ERB1 family.

It localises to the nucleus. Its subcellular location is the nucleolus. The protein resides in the nucleoplasm. Its function is as follows. Required for maturation of ribosomal RNAs and formation of the large ribosomal subunit. In Monosiga brevicollis (Choanoflagellate), this protein is Ribosome biogenesis protein BOP1 homolog.